Here is a 170-residue protein sequence, read N- to C-terminus: Large ribosomal subunit protein uL11 (170 aa).

It belongs to the universal ribosomal protein uL11 family. In terms of assembly, part of the ribosomal stalk of the 50S ribosomal subunit. Interacts with L10 and the large rRNA to form the base of the stalk. L10 forms an elongated spine to which L12 dimers bind in a sequential fashion forming a multimeric L10(L12)X complex.

In terms of biological role, forms part of the ribosomal stalk which helps the ribosome interact with GTP-bound translation factors. In Saccharolobus solfataricus (strain ATCC 35092 / DSM 1617 / JCM 11322 / P2) (Sulfolobus solfataricus), this protein is Large ribosomal subunit protein uL11.